We begin with the raw amino-acid sequence, 86 residues long: U-actitoxin-Avd10a (86 aa).

The N-terminal stretch at 1 to 20 (MSRIAILLFVAFLLVAGISA) is a signal peptide. The propeptide occupies 21–42 (KSTAHFKKNVLADLFKERRFNA). Positions 51 to 86 (CVNIDVDSFCDGMAERGACNIIPQMATNCAKACNSC) constitute a ShKT domain. Intrachain disulfides connect cysteine 51/cysteine 86, cysteine 60/cysteine 79, and cysteine 69/cysteine 83.

Belongs to the sea anemone type 1 potassium channel toxin family. Type 1b subfamily.

It localises to the secreted. The protein localises to the nematocyst. Functionally, inhibits voltage-gated potassium channels (Kv1/KCNA). The chain is U-actitoxin-Avd10a from Anemonia viridis (Snakelocks anemone).